The primary structure comprises 1865 residues: Transcription initiation factor TFIID subunit 1 (1865 aa).

The segment at methionine 1–glycine 27 is disordered. The Protein kinase 1 domain occupies methionine 1–isoleucine 409. Serine 131 carries the post-translational modification Phosphoserine; by autocatalysis. The interval glutamate 144–aspartate 199 is disordered. Residues methionine 151–proline 160 show a composition bias toward pro residues. Over residues valine 161–aspartate 176 the composition is skewed to basic and acidic residues. The residue at position 302 (serine 302) is a Phosphoserine; by autocatalysis. The tract at residues proline 509–leucine 530 is disordered. The tract at residues lysine 512 to lysine 971 is histone acetyltransferase (HAT). Residue lysine 539 is modified to N6-acetyllysine. Residues lysine 544 and lysine 557 each participate in a glycyl lysine isopeptide (Lys-Gly) (interchain with G-Cter in SUMO2) cross-link. Disordered stretches follow at residues proline 964–valine 983 and arginine 1228–arginine 1252. Basic and acidic residues-rich tracts occupy residues glutamine 969–proline 978 and arginine 1228–lysine 1244. The HMG box DNA-binding region spans valine 1190–methionine 1268. An interaction with ASF1A and ASF1B region spans residues valine 1337 to alanine 1624. A Nuclear localization signal motif is present at residues proline 1346 to valine 1353. Bromo domains follow at residues arginine 1371–lysine 1479 and leucine 1493–tyrosine 1602. Residues methionine 1420–glutamate 1865 form the Protein kinase 2 domain. The segment at glutamate 1625–glutamate 1865 is disordered. Residues threonine 1633–proline 1642 are compositionally biased toward pro residues. Over residues aspartate 1646–glutamine 1682 the composition is skewed to polar residues. Phosphoserine occurs at positions 1664 and 1667. Acidic residues-rich tracts occupy residues glutamate 1683 to glycine 1697 and glutamate 1715 to aspartate 1730. Residues serine 1739 to serine 1751 are compositionally biased toward low complexity. A phosphoserine mark is found at serine 1773, serine 1776, and serine 1794. The segment covering lysine 1804 to serine 1814 has biased composition (polar residues). Over residues valine 1820–glutamate 1829 the composition is skewed to acidic residues. At serine 1821 the chain carries Phosphoserine. Residues serine 1832 to histidine 1841 show a composition bias toward polar residues.

This sequence belongs to the TAF1 family. As to quaternary structure, component of the TFIID basal transcription factor complex, composed of TATA-box-binding protein TBP, and a number of TBP-associated factors (TAFs), including TAF1, TAF2, TAF3, TAF4, TAF5, TAF6, TAF7, TAF8, TAF9, TAF10, TAF11, TAF12 and TAF13. Interacts with TAF7; the interaction is direct. TAF1, when part of the TFIID complex, interacts with C-terminus of TP53. Part of a TFIID-containing RNA polymerase II pre-initiation complex that is composed of TBP and at least GTF2A1, GTF2A2, GTF2E1, GTF2E2, GTF2F1, GTF2H2, GTF2H3, GTF2H4, GTF2H5, GTF2B, TCEA1, ERCC2, ERCC3, TAF1, TAF2, TAF3, TAF4, TAF5, TAF6, TAF7, TAF8, TAF9, TAF10, TAF11, TAF12 and TAF13. Component of some MLL1/MLL complex, at least composed of the core components KMT2A/MLL1, ASH2L, HCFC1/HCF1, WDR5 and RBBP5, as well as the facultative components BACC1, CHD8, E2F6, HSP70, INO80C, KANSL1, LAS1L, MAX, MCRS1, MGA, KAT8/MOF, PELP1, PHF20, PRP31, RING2, RUVB1/TIP49A, RUVB2/TIP49B, SENP3, TAF1, TAF4, TAF6, TAF7, TAF9 and TEX10. RB1 interacts with the N-terminal domain of TAF1. Interacts with ASF1A and ASF1B. Interacts (via bromo domains) with acetylated lysine residues on the N-terminus of histone H1.4, H2A, H2B, H3 and H4 (in vitro). It depends on Mg(2+) as a cofactor. Phosphorylated by casein kinase II in vitro.

Its subcellular location is the nucleus. The enzyme catalyses L-seryl-[protein] + ATP = O-phospho-L-seryl-[protein] + ADP + H(+). It carries out the reaction L-threonyl-[protein] + ATP = O-phospho-L-threonyl-[protein] + ADP + H(+). The catalysed reaction is L-lysyl-[protein] + acetyl-CoA = N(6)-acetyl-L-lysyl-[protein] + CoA + H(+). Its activity is regulated as follows. Autophosphorylates on Ser residues. Inhibited by retinoblastoma tumor suppressor protein, RB1. Binding to TAF1 or CIITA inhibits the histone acetyltransferase activity. In terms of biological role, the TFIID basal transcription factor complex plays a major role in the initiation of RNA polymerase II (Pol II)-dependent transcription. TFIID recognizes and binds promoters with or without a TATA box via its subunit TBP, a TATA-box-binding protein, and promotes assembly of the pre-initiation complex (PIC). The TFIID complex consists of TBP and TBP-associated factors (TAFs), including TAF1, TAF2, TAF3, TAF4, TAF5, TAF6, TAF7, TAF8, TAF9, TAF10, TAF11, TAF12 and TAF13. TAF1 is the largest component and core scaffold of the TFIID complex, involved in nucleating complex assembly. TAF1 forms a promoter DNA binding subcomplex of TFIID, together with TAF7 and TAF2. Contains novel N- and C-terminal Ser/Thr kinase domains which can autophosphorylate or transphosphorylate other transcription factors. Phosphorylates TP53 on 'Thr-55' which leads to MDM2-mediated degradation of TP53. Phosphorylates GTF2A1 and GTF2F1 on Ser residues. Possesses DNA-binding activity. Essential for progression of the G1 phase of the cell cycle. The protein is Transcription initiation factor TFIID subunit 1 of Mesocricetus auratus (Golden hamster).